A 421-amino-acid polypeptide reads, in one-letter code: RNase J-like protein (421 aa).

Zn(2+) is bound by residues H55, H57, D59, H60, H132, D153, and H389.

The protein belongs to the metallo-beta-lactamase superfamily. RNA-metabolizing metallo-beta-lactamase-like family. As to quaternary structure, forms homodimers on heating to 60 degrees Celsius which may be the active form. Requires Zn(2+) as cofactor.

Inhibited by imidazole. A 5'-3' exoribonuclease with a strong reference for 5'-monophosphorylated RNA and no endoribonuclease activty. This is RNase J-like protein from Methanocaldococcus jannaschii (strain ATCC 43067 / DSM 2661 / JAL-1 / JCM 10045 / NBRC 100440) (Methanococcus jannaschii).